We begin with the raw amino-acid sequence, 436 residues long: Trigger factor (436 aa).

Positions 161–246 (GDQLNIDFVG…VNSVSAPQLP (86 aa)) constitute a PPIase FKBP-type domain.

It belongs to the FKBP-type PPIase family. Tig subfamily.

Its subcellular location is the cytoplasm. The catalysed reaction is [protein]-peptidylproline (omega=180) = [protein]-peptidylproline (omega=0). Functionally, involved in protein export. Acts as a chaperone by maintaining the newly synthesized protein in an open conformation. Functions as a peptidyl-prolyl cis-trans isomerase. This is Trigger factor from Ectopseudomonas mendocina (strain ymp) (Pseudomonas mendocina).